We begin with the raw amino-acid sequence, 163 residues long: CASP-like protein 1C2 (163 aa).

The Cytoplasmic segment spans residues 1–6; that stretch reads MAKSNK. Residues 7–27 form a helical membrane-spanning segment; that stretch reads IFTNTLRLLALAATVVAIVFM. Topologically, residues 28-52 are extracellular; sequence VTSHDSAQVLNLTFTAKYSNTPAFK. The N-linked (GlcNAc...) asparagine glycan is linked to asparagine 38. Residues 53–73 traverse the membrane as a helical segment; that stretch reads FLVIGEAIAGGYTVISILLSF. Over 74–79 the chain is Cytoplasmic; the sequence is KGLFWR. A helical transmembrane segment spans residues 80–100; the sequence is LIVILDMVTTVLLTSSISAAL. The Extracellular portion of the chain corresponds to 101–128; that stretch reads AIAQVGKKGNTHAGWLPICGQVPDFCDY. Residues 129–149 form a helical membrane-spanning segment; that stretch reads VTIALIAGFAAAIIYFVLLLC. Topologically, residues 150 to 163 are cytoplasmic; the sequence is SLYVVLSPIFVATP.

It belongs to the Casparian strip membrane proteins (CASP) family. As to quaternary structure, homodimer and heterodimers.

The protein localises to the cell membrane. The chain is CASP-like protein 1C2 from Populus trichocarpa (Western balsam poplar).